A 398-amino-acid chain; its full sequence is Selection and upkeep of intraepithelial T-cells protein 8 (398 aa).

The first 25 residues, 1 to 25 (MMKPEFSHFFGFCVYFLFLQVMASS), serve as a signal peptide directing secretion. In terms of domain architecture, Ig-like V-type spans 26–141 (EKLRVTTPTR…DVAIMNLNVT (116 aa)). At 26–244 (EKLRVTTPTR…ANELFNQDYL (219 aa)) the chain is on the extracellular side. A disulfide bond links Cys49 and Cys123. 2 N-linked (GlcNAc...) asparagine glycosylation sites follow: Asn92 and Asn139. One can recognise an Ig-like C1-type domain in the interval 142 to 233 (AVGLETEIHV…TGEEKQTSII (92 aa)). Cys163 and Cys217 form a disulfide bridge. Residues 245–265 (WVGIFPFSVLSLILFGVLPFI) form a helical membrane-spanning segment. The Cytoplasmic segment spans residues 266–288 (NSFFRSQGCASGCLSKCLPVVTS). Residues 289–309 (WPVQIVHFLVCSGVLFAVYLP) form a helical membrane-spanning segment. Residues 310–331 (HRYRVSLSDPQFPLYNNWITEL) are Extracellular-facing. Residues 332–352 (LIVILFLTICFVLPITVLLLI) form a helical membrane-spanning segment. Topologically, residues 353–398 (KLSPTCLAKWEKNKDDIMDSQLGLGKAREASTLYEEQSRKSWEQEK) are cytoplasmic.

Belongs to the SKINT family. In terms of tissue distribution, expressed in skin, thymus, testis and, to a lower extent, bladder, brain, heart, kidney, mammary gland, small intestine and uterus.

It is found in the membrane. In terms of biological role, may act by engaging a cell surface molecule on immature T-cells in the embryonic thymus. The polypeptide is Selection and upkeep of intraepithelial T-cells protein 8 (Skint8) (Mus musculus (Mouse)).